A 403-amino-acid polypeptide reads, in one-letter code: Phosphopentomutase (403 aa).

Asp13, Asp298, His303, Asp339, His340, and His351 together coordinate Mn(2+).

This sequence belongs to the phosphopentomutase family. The cofactor is Mn(2+).

The protein localises to the cytoplasm. It catalyses the reaction 2-deoxy-alpha-D-ribose 1-phosphate = 2-deoxy-D-ribose 5-phosphate. It carries out the reaction alpha-D-ribose 1-phosphate = D-ribose 5-phosphate. Its pathway is carbohydrate degradation; 2-deoxy-D-ribose 1-phosphate degradation; D-glyceraldehyde 3-phosphate and acetaldehyde from 2-deoxy-alpha-D-ribose 1-phosphate: step 1/2. Isomerase that catalyzes the conversion of deoxy-ribose 1-phosphate (dRib-1-P) and ribose 1-phosphate (Rib-1-P) to deoxy-ribose 5-phosphate (dRib-5-P) and ribose 5-phosphate (Rib-5-P), respectively. The sequence is that of Phosphopentomutase from Streptococcus thermophilus.